The following is a 602-amino-acid chain: MTPLSSELVGFTIPFYSKTQKPYSNSSHGLLLSHNRSSLLTFSNSNPNNDNGRSFSSSGARNLQTTTTTDATLPTERRQQHSQSLGFRDTQMLKIFHRSCRSGNYIESLHLLETMVRKGYNPDVILCTKLIKGFFTLRNIPKAVRVMEILEKFGQPDVFAYNALINGFCKMNRIDDATRVLDRMRSKDFSPDTVTYNIMIGSLCSRGKLDLALKVLNQLLSDNCQPTVITYTILIEATMLEGGVDEALKLMDEMLSRGLKPDMFTYNTIIRGMCKEGMVDRAFEMVRNLELKGCEPDVISYNILLRALLNQGKWEEGEKLMTKMFSEKCDPNVVTYSILITTLCRDGKIEEAMNLLKLMKEKGLTPDAYSYDPLIAAFCREGRLDVAIEFLETMISDGCLPDIVNYNTVLATLCKNGKADQALEIFGKLGEVGCSPNSSSYNTMFSALWSSGDKIRALHMILEMMSNGIDPDEITYNSMISCLCREGMVDEAFELLVDMRSCEFHPSVVTYNIVLLGFCKAHRIEDAINVLESMVGNGCRPNETTYTVLIEGIGFAGYRAEAMELANDLVRIDAISEYSFKRLHRTFPLLNVLQRSSQTFGY.

The transit peptide at methionine 1–arginine 78 directs the protein to the chloroplast. Over residues phenylalanine 42–glutamine 64 the composition is skewed to polar residues. A disordered region spans residues phenylalanine 42–leucine 85. Residues threonine 65 to proline 74 show a composition bias toward low complexity. PPR repeat units lie at residues arginine 88–proline 122, aspartate 123–phenylalanine 153, aspartate 157–proline 191, aspartate 192–proline 226, threonine 227–proline 261, aspartate 262–proline 296, aspartate 297–proline 331, asparagine 332–proline 366, aspartate 367–proline 401, aspartate 402–proline 436, asparagine 437–proline 471, aspartate 472–proline 506, serine 507–proline 541, and asparagine 542–serine 576.

Belongs to the PPR family. P subfamily.

Its subcellular location is the plastid. It is found in the chloroplast. The chain is Pentatricopeptide repeat-containing protein At3g04760, chloroplastic from Arabidopsis thaliana (Mouse-ear cress).